The following is a 1521-amino-acid chain: Suppressor of Ty 6 homolog (1521 aa).

Residues 1-204 (MDFIDNQAEE…EGAEDDARDV (204 aa)) are disordered. The span at 26–41 (KKMKMAKDKLKKKKKV) shows a compositional bias: basic residues. Positions 26–42 (KKMKMAKDKLKKKKKVV) match the Nuclear localization signal motif. 2 stretches are compositionally biased toward acidic residues: residues 45–56 (SDEDEDDEDDEE) and 67–76 (ADEDDEEEDA). The span at 77–89 (RSEKSDRSRRSEI) shows a compositional bias: basic and acidic residues. Acidic residues predominate over residues 90 to 103 (NDELDDEDLDLIDE). The span at 127–149 (PIRRSNQDDDDLQSERGSDDGDK) shows a compositional bias: basic and acidic residues. Acidic residues predominate over residues 167–177 (RSEDDFIEDDG). Residues 1182–1251 (LNAGRPGGCV…EKFSILLSCK (70 aa)) form the S1 motif domain. The SH2 domain occupies 1299 to 1388 (HPNFHNVSYE…IARFVLPMIQ (90 aa)). Residues 1490–1521 (GIRSSLSYRPTGRTGPPPSAPYQQPPQQQYYR) form a disordered region. The segment covering 1504 to 1513 (GPPPSAPYQQ) has biased composition (pro residues).

It belongs to the SPT6 family. In terms of assembly, interacts with glp-1 and lin-12.

It is found in the nucleus. In terms of biological role, histone H3-H4 chaperone that plays a role in maintenance of chromatin structure during RNA polymerase II transcription elongation. May be required for several aspects of morphogenesis of C.briggsae, including regulation of division in the germline and gut and specification of ventral-uterine precursor cell fate. This chain is Suppressor of Ty 6 homolog (emb-5), found in Caenorhabditis briggsae.